We begin with the raw amino-acid sequence, 222 residues long: uncharacterized protein (222 aa).

The N-myristoyl glycine; by host moiety is linked to residue G2.

The protein belongs to the mimivirus R683/R861 family.

This is an uncharacterized protein from Acanthamoeba polyphaga mimivirus (APMV).